A 94-amino-acid chain; its full sequence is Large ribosomal subunit protein bL25 (94 aa).

This sequence belongs to the bacterial ribosomal protein bL25 family. In terms of assembly, part of the 50S ribosomal subunit; part of the 5S rRNA/L5/L18/L25 subcomplex. Contacts the 5S rRNA. Binds to the 5S rRNA independently of L5 and L18.

Its function is as follows. This is one of the proteins that binds to the 5S RNA in the ribosome where it forms part of the central protuberance. The protein is Large ribosomal subunit protein bL25 of Photorhabdus laumondii subsp. laumondii (strain DSM 15139 / CIP 105565 / TT01) (Photorhabdus luminescens subsp. laumondii).